The primary structure comprises 573 residues: Probable D-xylulose kinase A (573 aa).

Substrate-binding residues include H97, R168, D284, and N285. Residues W366, 471–472 (GG), and N475 contribute to the ATP site.

It belongs to the FGGY kinase family.

Its subcellular location is the cytoplasm. It carries out the reaction D-xylulose + ATP = D-xylulose 5-phosphate + ADP + H(+). In terms of biological role, highly specific D-xylulose kinase which participates in the catabolism of xylose. Xylose is a major component of hemicelluloses such as xylan. Most fungi utilize D-xylose via three enzymatic reactions, xylose reductase (XR), xylitol dehydrogenase (XDH), and xylulokinase, to form xylulose 5-phosphate, which enters pentose phosphate pathway. This chain is Probable D-xylulose kinase A (xkiA), found in Neosartorya fischeri (strain ATCC 1020 / DSM 3700 / CBS 544.65 / FGSC A1164 / JCM 1740 / NRRL 181 / WB 181) (Aspergillus fischerianus).